Consider the following 528-residue polypeptide: uncharacterized protein (528 aa).

A disordered region spans residues 1–51 (MEHPKRPTPKNEALHIDASGRGESSFSVHRSHSGGHEPFAPSPGSSIGASV). Repeat copies occupy residues 185-213 (EQEEEYISNSLLKKIQQLNQDKDYLVKKY) and 285-313 (EQEQELLINTLGKRMSQMNEEKRKLQQAL). Residues 185-313 (EQEEEYISNS…EEKRKLQQAL (129 aa)) are 2 X 29 AA repeats. 2 disordered regions span residues 467 to 497 (RAHGSSPPTVVVQPSTSRAGSNSTANINNDT) and 509 to 528 (TVHPTQRATPARNERPDSHY). A compositionally biased stretch (polar residues) spans 472–496 (SPPTVVVQPSTSRAGSNSTANINND).

This is an uncharacterized protein from Caenorhabditis elegans.